The following is a 45-amino-acid chain: Metallothionein-like protein 1C (45 aa).

It belongs to the metallothionein superfamily. Type 15 family. Widely expressed at low levels.

Its function is as follows. Metallothioneins have a high content of cysteine residues that bind various heavy metals. Confers tolerance to cadmium (Cd) and plays a role in Cd and zinc (Zn) homeostasis. The sequence is that of Metallothionein-like protein 1C (MT1C) from Arabidopsis thaliana (Mouse-ear cress).